Reading from the N-terminus, the 53-residue chain is MAVKRSTRLGCNDCREINYLTFKNVKKNPEKLALNKFCSRCRKVVVHKEVKRK.

This sequence belongs to the bacterial ribosomal protein bL33 family.

This chain is Large ribosomal subunit protein bL33A (rpmG1), found in Mycoplasma pneumoniae (strain ATCC 29342 / M129 / Subtype 1) (Mycoplasmoides pneumoniae).